Consider the following 515-residue polypeptide: MAARLIGFFLFQAVSWAYGAQPCIPKSFGYSSVVCVCNASYCDSLDPVTLPALGTFSRYESTRRGRRMELSVGAIQANRTGTGLLLTLQPEKKFQKVKGFGGAMTDATALNILALSPPTQKLLLRSYFSTNGIEYNIIRVPMASCDFSIRVYTYADTPNDFQLSNFSLPEEDTKLKIPLIHQALKMSSRPISLFASPWTSPTWLKTNGRVNGKGSLKGQPGDIFHQTWANYFVKFLDAYAKYGLRFWAVTAENEPTAGLFTGYPFQCLGFTPEHQRDFISRDLGPALANSSHDVKLLMLDDQRLLLPRWAEVVLSDPEAAKYVHGIAVHWYMDFLAPAKATLGETHRLFPNTMLFASEACVGSKFWEQSVRLGSWDRGMQYSHSIITNLLYHVTGWTDWNLALNPEGGPNWVRNFVDSPIIVDIPKDAFYKQPMFYHLGHFSKFIPEGSQRVALVASESTDLETVALLRPDGSAVVVVLNRSSEDVPLTISDPDLGFLETVSPGYSIHTYLWRRQ.

A signal peptide spans 1–19 (MAARLIGFFLFQAVSWAYG). Intrachain disulfides connect Cys23–Cys35 and Cys37–Cys42. Residues Asn38 and Asn78 are each glycosylated (N-linked (GlcNAc...) asparagine). Residue Asn165 is glycosylated (N-linked (GlcNAc...) (high mannose) asparagine). Residue Glu254 is the Proton donor of the active site. N-linked (GlcNAc...) asparagine glycosylation occurs at Asn289. The Nucleophile role is filled by Glu358. N-linked (GlcNAc...) asparagine glycosylation occurs at Asn480.

The protein belongs to the glycosyl hydrolase 30 family. Interacts with saposin-C. Interacts with SCARB2. Interacts with TCP1. Interacts with GRN; this interaction prevents aggregation of GBA1-SCARB2 complex via interaction with HSPA1A upon stress.

The protein resides in the lysosome membrane. It carries out the reaction a beta-D-glucosyl-(1&lt;-&gt;1')-N-acylsphing-4-enine + H2O = an N-acylsphing-4-enine + D-glucose. It catalyses the reaction a beta-D-galactosyl-(1&lt;-&gt;1')-N-acylsphing-4-enine + H2O = an N-acylsphing-4-enine + D-galactose. The enzyme catalyses cholesteryl 3-beta-D-glucoside + H2O = cholesterol + D-glucose. The catalysed reaction is a beta-D-glucosyl-(1&lt;-&gt;1')-N-acylsphing-4-enine + cholesterol = cholesteryl 3-beta-D-glucoside + an N-acylsphing-4-enine. It carries out the reaction beta-D-glucosyl-(1&lt;-&gt;1')-N-hexadecanoylsphing-4-enine + cholesterol = cholesteryl 3-beta-D-glucoside + N-hexadecanoylsphing-4-enine. It catalyses the reaction beta-D-glucosyl-N-(9Z-octadecenoyl)-sphing-4E-enine + cholesterol = N-(9Z-octadecenoyl)-sphing-4-enine + cholesteryl 3-beta-D-glucoside. The enzyme catalyses beta-D-glucosyl-N-octanoylsphing-4E-enine + cholesterol = N-octanoylsphing-4-enine + cholesteryl 3-beta-D-glucoside. The catalysed reaction is beta-D-glucosyl-N-dodecanoylsphing-4-enine + cholesterol = N-dodecanoylsphing-4-enine + cholesteryl 3-beta-D-glucoside. It carries out the reaction beta-D-glucosyl-(1&lt;-&gt;1)-N-octadecanoylsphing-4-enine + cholesterol = N-octadecanoylsphing-4-enine + cholesteryl 3-beta-D-glucoside. It catalyses the reaction beta-D-glucosyl-(1&lt;-&gt;1')-N-(15Z-tetracosenoyl)-sphing-4-enine + cholesterol = N-(15Z-tetracosenoyl)-sphing-4-enine + cholesteryl 3-beta-D-glucoside. The enzyme catalyses a beta-D-galactosyl-(1&lt;-&gt;1')-N-acylsphing-4-enine + cholesterol = cholesteryl 3-beta-D-galactoside + an N-acylsphing-4-enine. The catalysed reaction is 1-(beta-D-galactosyl)-N-dodecanoylsphing-4-enine + cholesterol = cholesteryl 3-beta-D-galactoside + N-dodecanoylsphing-4-enine. It carries out the reaction a beta-D-xylosyl-(1&lt;-&gt;1')-N-acylsphing-4-enine + cholesterol = cholesteryl 3-beta-D-xyloside + an N-acylsphing-4-enine. It catalyses the reaction beta-D-xylosyl-(1&lt;-&gt;1')-N-(9Z-octadecenoyl)-sphing-4-enine + cholesterol = cholesteryl 3-beta-D-xyloside + N-(9Z-octadecenoyl)-sphing-4-enine. The protein operates within steroid metabolism; cholesterol metabolism. It functions in the pathway sphingolipid metabolism. With respect to regulation, inhibited by conduritol B epoxide/CBE. Glucosylceramidase that catalyzes, within the lysosomal compartment, the hydrolysis of glucosylceramides/GlcCers (such as beta-D-glucosyl-(1&lt;-&gt;1')-N-acylsphing-4-enine) into free ceramides (such as N-acylsphing-4-enine) and glucose. Plays a central role in the degradation of complex lipids and the turnover of cellular membranes. Through the production of ceramides, participates in the PKC-activated salvage pathway of ceramide formation. Catalyzes the glucosylation of cholesterol, through a transglucosylation reaction where glucose is transferred from GlcCer to cholesterol. GlcCer containing mono-unsaturated fatty acids (such as beta-D-glucosyl-N-(9Z-octadecenoyl)-sphing-4-enine) are preferred as glucose donors for cholesterol glucosylation when compared with GlcCer containing same chain length of saturated fatty acids (such as beta-D-glucosyl-N-octadecanoyl-sphing-4-enine). Under specific conditions, may alternatively catalyze the reverse reaction, transferring glucose from cholesteryl 3-beta-D-glucoside to ceramide. Can also hydrolyze cholesteryl 3-beta-D-glucoside producing glucose and cholesterol. Catalyzes the hydrolysis of galactosylceramides/GalCers (such as beta-D-galactosyl-(1&lt;-&gt;1')-N-acylsphing-4-enine), as well as the transfer of galactose between GalCers and cholesterol in vitro, but with lower activity than with GlcCers. Contrary to GlcCer and GalCer, xylosylceramide/XylCer (such as beta-D-xyosyl-(1&lt;-&gt;1')-N-acylsphing-4-enine) is not a good substrate for hydrolysis, however it is a good xylose donor for transxylosylation activity to form cholesteryl 3-beta-D-xyloside. The polypeptide is Lysosomal acid glucosylceramidase (Gba1) (Mus musculus (Mouse)).